Consider the following 326-residue polypeptide: tRNA-modifying protein YgfZ (326 aa).

Folate contacts are provided by W27 and W189.

It belongs to the tRNA-modifying YgfZ family.

The protein resides in the cytoplasm. In terms of biological role, folate-binding protein involved in regulating the level of ATP-DnaA and in the modification of some tRNAs. It is probably a key factor in regulatory networks that act via tRNA modification, such as initiation of chromosomal replication. This is tRNA-modifying protein YgfZ from Escherichia coli O45:K1 (strain S88 / ExPEC).